The sequence spans 452 residues: Ribulose bisphosphate carboxylase large chain (452 aa).

Residues 1 to 2 (MS) constitute a propeptide that is removed on maturation. P3 is subject to N-acetylproline. N6,N6,N6-trimethyllysine is present on K14. Residues N123 and T173 each coordinate substrate. Catalysis depends on K175, which acts as the Proton acceptor. K177 lines the substrate pocket. Positions 201, 203, and 204 each coordinate Mg(2+). Position 201 is an N6-carboxylysine (K201). H294 serves as the catalytic Proton acceptor. R295, X327, and S379 together coordinate substrate.

It belongs to the RuBisCO large chain family. Type I subfamily. Heterohexadecamer of 8 large chains and 8 small chains; disulfide-linked. The disulfide link is formed within the large subunit homodimers. Mg(2+) serves as cofactor. In terms of processing, the disulfide bond which can form in the large chain dimeric partners within the hexadecamer appears to be associated with oxidative stress and protein turnover.

Its subcellular location is the plastid. The protein localises to the chloroplast. It catalyses the reaction 2 (2R)-3-phosphoglycerate + 2 H(+) = D-ribulose 1,5-bisphosphate + CO2 + H2O. The catalysed reaction is D-ribulose 1,5-bisphosphate + O2 = 2-phosphoglycolate + (2R)-3-phosphoglycerate + 2 H(+). In terms of biological role, ruBisCO catalyzes two reactions: the carboxylation of D-ribulose 1,5-bisphosphate, the primary event in carbon dioxide fixation, as well as the oxidative fragmentation of the pentose substrate in the photorespiration process. Both reactions occur simultaneously and in competition at the same active site. The polypeptide is Ribulose bisphosphate carboxylase large chain (Salvadora persica (Toothbrush tree)).